The primary structure comprises 251 residues: SNAP25 homologous protein SNAP29 (251 aa).

Positions 1–52 (MAPKNSSWNPFDDEKEAAKSFSLNPFDDDDDDKEVEKRFTSSLKPSGGKENQ) are disordered. Over residues 40-52 (TSSLKPSGGKENQ) the composition is skewed to polar residues. A t-SNARE coiled-coil homology domain is found at 186–248 (KTQIAKQDEA…KQSNQRARYL (63 aa)).

Belongs to the SNAP-25 family.

Its subcellular location is the membrane. The protein localises to the cytoplasm. SNAREs, soluble N-ethylmaleimide-sensitive factor-attachment protein receptors, are essential proteins for fusion of cellular membranes. SNAREs localized on opposing membranes assemble to form a trans-SNARE complex, an extended, parallel four alpha-helical bundle that drives membrane fusion. The sequence is that of SNAP25 homologous protein SNAP29 (SNAP29) from Arabidopsis thaliana (Mouse-ear cress).